Here is a 318-residue protein sequence, read N- to C-terminus: Large ribosomal subunit protein uL10 (318 aa).

Tyr24 carries the post-translational modification Phosphotyrosine. At Thr59 the chain carries Phosphothreonine. A Glycyl lysine isopeptide (Lys-Gly) (interchain with G-Cter in ubiquitin) cross-link involves residue Lys264. Residue Lys298 forms a Glycyl lysine isopeptide (Lys-Gly) (interchain with G-Cter in SUMO1); alternate linkage. Lys298 participates in a covalent cross-link: Glycyl lysine isopeptide (Lys-Gly) (interchain with G-Cter in SUMO2); alternate. Positions 298–318 are disordered; it reads KVEAKEESEESDEDMGFGLFD. The span at 303–312 shows a compositional bias: acidic residues; it reads EESEESDEDM. Residues Ser305 and Ser308 each carry the phosphoserine modification.

The protein belongs to the universal ribosomal protein uL10 family. P0 forms a pentameric complex by interaction with dimers of P1 and P2. Identified in a IGF2BP1-dependent mRNP granule complex containing untranslated mRNAs. Interacts with APEX1. Interacts with FMR1. Post-translationally, ubiquitinated at Lys-264 by RNF14 and RNF25 in response to ribosome collisions (ribosome stalling).

It localises to the nucleus. Its subcellular location is the cytoplasm. Functionally, ribosomal protein P0 is the functional equivalent of E.coli protein L10. In Sus scrofa (Pig), this protein is Large ribosomal subunit protein uL10 (RPLP0).